Here is a 199-residue protein sequence, read N- to C-terminus: N-(5'-phosphoribosyl)anthranilate isomerase (199 aa).

This sequence belongs to the TrpF family.

It carries out the reaction N-(5-phospho-beta-D-ribosyl)anthranilate = 1-(2-carboxyphenylamino)-1-deoxy-D-ribulose 5-phosphate. It participates in amino-acid biosynthesis; L-tryptophan biosynthesis; L-tryptophan from chorismate: step 3/5. The sequence is that of N-(5'-phosphoribosyl)anthranilate isomerase from Streptococcus pneumoniae serotype 19F (strain G54).